Here is a 662-residue protein sequence, read N- to C-terminus: Hypoxia-inducible factor 3-alpha (662 aa).

A disordered region spans residues 1 to 25; the sequence is MDWDQDRSSTELRKEKSRDAARSRR. In terms of domain architecture, bHLH spans 12-65; it reads LRKEKSRDAARSRRSQETEVLYQLAHTLPFARGVSAHLDKASIMRLTISYLRMH. A nuclear localization signal region spans residues 75–98; that stretch reads QVRKEGEPLDACYLKALEGFVMVL. PAS domains lie at 80-150 and 225-295; these read GEPL…PSLS and PHPA…LSKG. The interval 228–272 is nuclear export signal; the sequence is ASLEPPLGRGAFLSRHSLDMKFTYCDERIAEVAGYSPDDLIGCSA. The tract at residues 352–379 is disordered; sequence EQTEQHTRRPPQLGTSSKKGIPGNSLDP. The LRRLL motif lies at 410–413; that stretch reads LRRL. Disordered stretches follow at residues 417 to 445 and 459 to 480; these read ILDG…ADLP and STAR…PDTP. The span at 421–433 shows a compositional bias: low complexity; that stretch reads PPTAATPSTPQAA. Positions 448 to 581 are ODD; that stretch reads LAVGLENAHR…SEDKGLELLE (134 aa). An NTAD region spans residues 450–501; it reads VGLENAHRLSTARKNKTMETDLDIAQDPDTPDLEMLAPYISMDDDFQLNSSE. A Glycyl lysine isopeptide (Lys-Gly) (interchain with G-Cter in ubiquitin) cross-link involves residue Lys-463. Residues 469 to 480 show a composition bias toward acidic residues; it reads TDLDIAQDPDTP. An LAPYISMD motif is present at residues 485 to 492; that stretch reads LAPYISMD. Position 487 is a 4-hydroxyproline (Pro-487). The segment at 500–595 is disordered; the sequence is SEQLPKVHRR…KRSPRLEPGS (96 aa). Basic residues predominate over residues 505–521; sequence KVHRRPPRTARRPRARS. Residue Lys-565 forms a Glycyl lysine isopeptide (Lys-Gly) (interchain with G-Cter in ubiquitin) linkage. Positions 572-584 are enriched in basic and acidic residues; it reads SEDKGLELLETKP.

Interacts with ARNT, BAD, BCL2L2, EPAS1, HIF1A, MCL1 and VHL. Post-translationally, in normoxia, hydroxylated on Pro-487 in the oxygen-dependent degradation domain (ODD) by PHD. The hydroxylated proline promotes interaction with VHL, initiating rapid ubiquitination and subsequent proteasomal degradation. In terms of processing, ubiquitinated; ubiquitination occurs in a VHL- and oxygen-dependent pathway and subsequently targeted for proteasomal degradation. Expressed in the perivenous zone of the liver. Expressed in all tissues examined during normoxia. Expressed in brain and lung. Expressed in periportal and perivenous hepatocytes and in endothelial cells of the central vein (at protein level). Highest expression seen in the cerebral cortex, hippocampus, and lung. Low expression in myocardial tissue and liver.

It is found in the nucleus. It localises to the cytoplasm. The protein localises to the nucleus speckle. Its subcellular location is the mitochondrion. In terms of biological role, acts as a transcriptional regulator in adaptive response to low oxygen tension. Attenuates the ability of transcription factor HIF1A, EPAS1 and the HIF1A-ARNT complex to bind to hypoxia-responsive elements (HRE) located within the enhancer/promoter of hypoxia-inducible target genes and hence inhibits HRE-driven transcriptional activation. Functions as an inhibitor of angiogenesis in hypoxic cells of the cornea. Plays a role in the development of the cardiorespiratory system. May also be involved in apoptosis. May act as a tumor suppressor. The chain is Hypoxia-inducible factor 3-alpha from Rattus norvegicus (Rat).